Consider the following 644-residue polypeptide: Protein DA1-related 6 (644 aa).

3 UIM domains span residues 119 to 138 (EEDE…NNRR), 181 to 200 (DVDE…KGKG), and 244 to 263 (DEDE…KGQI). The LIM zinc-binding domain maps to 284 to 355 (SLCGGCNFAV…YVCKEKKMKT (72 aa)). The segment covering 572-589 (ASSSASSSSRTPPAASAS) has biased composition (low complexity). The disordered stretch occupies residues 572–591 (ASSSASSSSRTPPAASASKK).

In terms of assembly, interacts with ubiquitin.

Functionally, ubiquitin receptor that probably regulates developmental process. The sequence is that of Protein DA1-related 6 (DAR6) from Arabidopsis thaliana (Mouse-ear cress).